Consider the following 1001-residue polypeptide: MAVVIRLLGLPFIAGPVDIRHFFTGLTIPDGGVHIIGGEIGEAFIIFATDEDARRAISRSGGFIKDSSVELFLSSKAEMQKTIEMKRTDRVGRGRPGSGTSGVDSLSNFIESVKEEASNSGYGSSINQDAGFHTNGTGHGNLRPRKTRPLKAENPYLFLRGLPYLVNEDDVRVFFSGLCVDGVIFLKHHDGRNNGDAIVKFASCVDASGGLKCHRSFMGSRFIEVMQGSEQQWIEFGGNAVKEGDVLRRSEEHSPPRGINDRHFRKRSHSKSPRRTRSRSPLGFYVHLKNLSLSIDERDLRNFFRGTDLTDEQIRFLYKDENRTRYAFVMFKTLKDYNTALSLHKTVLQYRPVHIDPISRKQMLKFIARYEKKRSGSLERDRPGHVSQKYSQEGNSGQKLCIYIRNFPFDVTKVEVQKFFADFLLAEDDIYLLYDDKGVGLGEALVKFKSEEQAMKAERLNRRRFLGTEVLLRLISEAQIQEFGVNFSVMSSEKMQARSQSRERGDHSHLFDSKDPPIYSVGAFENFRHQLEDLRQLDNFKHPQRDFRQPDRHPPEDFRHSSEDFRFPPEDFRHSPEDFRRPREEDFRRPSEEDFRRPWEEDFRRPPEDDFRHPREEDWRRPLEEDWRRPLEEDFRRSPTEDFRQLPEEDFRQPPEEDLRWLPEEDFRRPPEEDWRRPPEEDFRRPLQGEWRRPPEDDFRRPPEEDFRHSPEEDFRQSPQEHFRRPPQEHFRRPPPEHFRRPPPEHFRRPPPEHFRRPPPEHFRRPPPEHFRRPPPEHFRRPPQEHFRRPPQEHFRRSREEDFRHPPDEDFRGPPDEDFRHPPDEDFRSPQEEDFRCPSDEDFRQLPEEDLREAPEEDPRLPDNFRPPGEDFRSPPDDFRSHRPFVNFGRPEGGKFDFGKHNMGSFPEGRFMPDPKINCGSGRVTPIKIMNLPFKANVNEILDFFHGYRIIPDSVSIQYNEQGLPTGEAIVAMINYNEAMAAIKDLNDRPVGPRKVKLTLL.

Phosphoserine is present on residues S98, S101, and S112. K114 is covalently cross-linked (Glycyl lysine isopeptide (Lys-Gly) (interchain with G-Cter in SUMO2)). Polar residues predominate over residues 119–128 (NSGYGSSINQ). The disordered stretch occupies residues 119–147 (NSGYGSSINQDAGFHTNGTGHGNLRPRKT). Residue K151 forms a Glycyl lysine isopeptide (Lys-Gly) (interchain with G-Cter in SUMO2) linkage. The region spanning 155-230 (PYLFLRGLPY…RFIEVMQGSE (76 aa)) is the RRM 1 domain. Over residues 247–262 (LRRSEEHSPPRGINDR) the composition is skewed to basic and acidic residues. The tract at residues 247 to 278 (LRRSEEHSPPRGINDRHFRKRSHSKSPRRTRS) is disordered. Phosphoserine is present on residues S250 and S254. Positions 263-278 (HFRKRSHSKSPRRTRS) are enriched in basic residues. At T276 the chain carries Phosphothreonine. Phosphoserine is present on residues S278, S280, S292, and S294. The RRM 2 domain maps to 284 to 360 (FYVHLKNLSL…RPVHIDPISR (77 aa)). K319 carries the post-translational modification N6-acetyllysine. A Glycyl lysine isopeptide (Lys-Gly) (interchain with G-Cter in SUMO2) cross-link involves residue K335. At S377 the chain carries Phosphoserine. In terms of domain architecture, RRM 3 spans 400-477 (LCIYIRNFPF…TEVLLRLISE (78 aa)). Glycyl lysine isopeptide (Lys-Gly) (interchain with G-Cter in SUMO2) cross-links involve residues K514 and K541. Residues 544–587 (QRDFRQPDRHPPEDFRHSSEDFRFPPEDFRHSPEDFRRPREEDF) form a disordered region. Residues S575, S591, and S638 each carry the phosphoserine modification. A compositionally biased stretch (basic and acidic residues) spans 631–881 (LEEDFRRSPT…FRSPPDDFRS (251 aa)). The segment at 631 to 882 (LEEDFRRSPT…RSPPDDFRSH (252 aa)) is disordered. Residue T640 is modified to Phosphothreonine. A phosphoserine mark is found at S710 and S718. K895 participates in a covalent cross-link: Glycyl lysine isopeptide (Lys-Gly) (interchain with G-Cter in SUMO2). One can recognise an RRM 4 domain in the interval 925-1001 (TPIKIMNLPF…GPRKVKLTLL (77 aa)).

The sequence is that of RNA-binding protein 12B (RBM12B) from Homo sapiens (Human).